Here is a 272-residue protein sequence, read N- to C-terminus: MARLAAFDMDGTLLMPDHHLGEKTLSTLARLRERDITLTFATGRHALEMQHILGALSLDAYLITGNGTRVHSLEGELLHRDDLPADVAELVLYQQWDTRASMHIFNDDGWFTGKENPALLQAFVYSGFRYQIIDVKKMPLGSVTKICFCGDHDDLTRLQIQLYEALGERAHLCFSATDCLEVLPVGCNKGAVLTVLTQHLGLSLRDCMAFGDAMNDREMLGSVGSGFIMGNAMPQLRAELPHLPVIGHCRNQAVSHYLTHWLDYPHLPYSPE.

D8 acts as the Nucleophile in catalysis. Mg(2+) contacts are provided by D8, D10, and D212.

The protein belongs to the HAD-like hydrolase superfamily. Cof family. Mg(2+) serves as cofactor.

It carries out the reaction 4-amino-2-methyl-5-(diphosphooxymethyl)pyrimidine + H2O = 4-amino-2-methyl-5-(phosphooxymethyl)pyrimidine + phosphate + H(+). Catalyzes the hydrolysis of 4-amino-2-methyl-5-hydroxymethylpyrimidine pyrophosphate (HMP-PP) to 4-amino-2-methyl-5-hydroxymethylpyrimidine phosphate (HMP-P). The polypeptide is HMP-PP phosphatase (Escherichia coli O81 (strain ED1a)).